We begin with the raw amino-acid sequence, 187 residues long: Protein dj-1beta (187 aa).

The residue at position 45 (Cys45) is a Cysteine sulfinic acid (-SO2H). Cys104 acts as the Nucleophile in catalysis. Cysteine sulfinic acid (-SO2H); alternate is present on Cys104.

Oxidation of Cys-45 and Cys-104 in response to oxidative stress. Levels of oxidation increase with age. Expressed in the head and testis (at protein level). Ubiquitously expressed at constant levels.

The protein localises to the mitochondrion. The protein resides in the cytoplasm. It localises to the nucleus. Its function is as follows. Plays an important role in cell protection against oxidative stress and cell death by acting as a oxidative stress sensor. Does not play a role in methylglyoxal detoxification. Plays a role in mitochondrial function together with Pink1. In motor neurons regulates structural synaptic plasticity of locomotor behavior as part of the PTEN-phosphatidylinositol 3-kinase pathway in response to oxygen species (ROS) levels. The chain is Protein dj-1beta from Drosophila melanogaster (Fruit fly).